The primary structure comprises 121 residues: Large ribosomal subunit protein bL12 (121 aa).

It belongs to the bacterial ribosomal protein bL12 family. Homodimer. Part of the ribosomal stalk of the 50S ribosomal subunit. Forms a multimeric L10(L12)X complex, where L10 forms an elongated spine to which 2 to 4 L12 dimers bind in a sequential fashion. Binds GTP-bound translation factors.

Its function is as follows. Forms part of the ribosomal stalk which helps the ribosome interact with GTP-bound translation factors. Is thus essential for accurate translation. In Macrococcus caseolyticus (strain JCSC5402) (Macrococcoides caseolyticum), this protein is Large ribosomal subunit protein bL12.